We begin with the raw amino-acid sequence, 473 residues long: Serine palmitoyltransferase 1 (473 aa).

The Lumenal segment spans residues 1-15; that stretch reads MATVAEQWVLVEMVQ. The segment at 1-66 is interaction with SPTLC2; it reads MATVAEQWVL…KEELIEEWQP (66 aa). Residues 16-36 traverse the membrane as a helical segment; sequence ALYEAPAYHLILEGILILWII. Over 37–473 the chain is Cytoplasmic; that stretch reads RLVFSKTYKL…IREAAQAVLL (437 aa). At Y164 the chain carries Phosphotyrosine; by ABL.

Belongs to the class-II pyridoxal-phosphate-dependent aminotransferase family. In terms of assembly, component of the serine palmitoyltransferase (SPT) complex, which is also composed of SPTLC2 or SPTLC3 and SPTSSA or SPTSSB. The heterodimer with SPTLC2 or SPTLC3 forms the catalytic core of the enzyme, while SPTSSA or SPTSSB subunits determine substrate specificity. SPT also interacts with ORMDL proteins, especially ORMDL3, which negatively regulate SPT activity in the presence of ceramides. Forms dimers of heterodimers with SPTLC2. Interacts with RTN4 (isoform B). It depends on pyridoxal 5'-phosphate as a cofactor. In terms of processing, phosphorylation at Tyr-164 inhibits activity and promotes cell survival. In terms of tissue distribution, expressed in a variety of tissues. Highest expression in brain, kidney and liver. Expressed in brown and white adipose tissues.

Its subcellular location is the endoplasmic reticulum membrane. It catalyses the reaction L-serine + hexadecanoyl-CoA + H(+) = 3-oxosphinganine + CO2 + CoA. The catalysed reaction is octadecanoyl-CoA + L-serine + H(+) = 3-oxoeicosasphinganine + CO2 + CoA. It carries out the reaction tetradecanoyl-CoA + L-serine + H(+) = 3-oxohexadecasphinganine + CO2 + CoA. The enzyme catalyses dodecanoyl-CoA + L-serine + H(+) = 3-oxotetradecasphinganine + CO2 + CoA. It participates in lipid metabolism; sphingolipid metabolism. SPT complex catalytic activity is negatively regulated by ORMDL proteins, including ORMDL3, in the presence of ceramides. This mechanism allows to maintain ceramide levels at sufficient concentrations for the production of complex sphingolipids, but which prevents the accumulation of ceramides to levels that trigger apoptosis. In terms of biological role, component of the serine palmitoyltransferase multisubunit enzyme (SPT) that catalyzes the initial and rate-limiting step in sphingolipid biosynthesis by condensing L-serine and activated acyl-CoA (most commonly palmitoyl-CoA) to form long-chain bases. The SPT complex is also composed of SPTLC2 or SPTLC3 and SPTSSA or SPTSSB. Within this complex, the heterodimer with SPTLC2 or SPTLC3 forms the catalytic core. The composition of the serine palmitoyltransferase (SPT) complex determines the substrate preference. The SPTLC1-SPTLC2-SPTSSA complex shows a strong preference for C16-CoA substrate, while the SPTLC1-SPTLC3-SPTSSA isozyme uses both C14-CoA and C16-CoA as substrates, with a slight preference for C14-CoA. The SPTLC1-SPTLC2-SPTSSB complex shows a strong preference for C18-CoA substrate, while the SPTLC1-SPTLC3-SPTSSB isozyme displays an ability to use a broader range of acyl-CoAs, without apparent preference. Required for adipocyte cell viability and metabolic homeostasis. The sequence is that of Serine palmitoyltransferase 1 (Sptlc1) from Mus musculus (Mouse).